The chain runs to 609 residues: Glutamine--fructose-6-phosphate aminotransferase [isomerizing] (609 aa).

Cys-2 acts as the Nucleophile; for GATase activity in catalysis. The Glutamine amidotransferase type-2 domain occupies 2–218 (CGIVGAIAQR…EGDIAEITRR (217 aa)). SIS domains follow at residues 286–426 (ADEL…LKGL) and 458–599 (LAED…VDQP). Lys-604 functions as the For Fru-6P isomerization activity in the catalytic mechanism.

Homodimer. In pull-down experiments interacts with CedA.

It localises to the cytoplasm. The catalysed reaction is D-fructose 6-phosphate + L-glutamine = D-glucosamine 6-phosphate + L-glutamate. Its function is as follows. Catalyzes the first step in hexosamine metabolism, converting fructose-6P into glucosamine-6P using glutamine as a nitrogen source. This is Glutamine--fructose-6-phosphate aminotransferase [isomerizing] (glmS) from Escherichia coli (strain K12).